The chain runs to 78 residues: Biotin synthase auxiliary protein (78 aa).

Belongs to the BsaP family. Requires iron-sulfur cluster as cofactor.

Required for the activity of the biotin synthase BioB. This Mycolicibacterium smegmatis (strain ATCC 700084 / mc(2)155) (Mycobacterium smegmatis) protein is Biotin synthase auxiliary protein.